We begin with the raw amino-acid sequence, 188 residues long: Adenylate kinase (188 aa).

ATP is bound at residue 10-15; that stretch reads GCGKGT. Residues 30–59 are NMP; sequence STGDMLRHARAAGTELGRRVAAIMDGGNLV. Residues T31, R36, 57–59, 85–88, and Q92 contribute to the AMP site; these read NLV and GFPR. The LID stretch occupies residues 126–136; it reads KRAEEEGRPDD. R127 is a binding site for ATP. AMP contacts are provided by R133 and R144. G172 contributes to the ATP binding site.

It belongs to the adenylate kinase family. In terms of assembly, monomer.

The protein resides in the cytoplasm. The enzyme catalyses AMP + ATP = 2 ADP. Its pathway is purine metabolism; AMP biosynthesis via salvage pathway; AMP from ADP: step 1/1. Its function is as follows. Catalyzes the reversible transfer of the terminal phosphate group between ATP and AMP. Plays an important role in cellular energy homeostasis and in adenine nucleotide metabolism. In Maricaulis maris (strain MCS10) (Caulobacter maris), this protein is Adenylate kinase.